We begin with the raw amino-acid sequence, 424 residues long: Serine hydroxymethyltransferase (424 aa).

Residues Leu-123 and 127 to 129 (GHL) each bind (6S)-5,6,7,8-tetrahydrofolate. N6-(pyridoxal phosphate)lysine is present on Lys-232. A (6S)-5,6,7,8-tetrahydrofolate-binding site is contributed by Glu-245.

This sequence belongs to the SHMT family. Homodimer. Pyridoxal 5'-phosphate serves as cofactor.

It is found in the cytoplasm. The enzyme catalyses (6R)-5,10-methylene-5,6,7,8-tetrahydrofolate + glycine + H2O = (6S)-5,6,7,8-tetrahydrofolate + L-serine. The protein operates within one-carbon metabolism; tetrahydrofolate interconversion. It functions in the pathway amino-acid biosynthesis; glycine biosynthesis; glycine from L-serine: step 1/1. Catalyzes the reversible interconversion of serine and glycine with tetrahydrofolate (THF) serving as the one-carbon carrier. This reaction serves as the major source of one-carbon groups required for the biosynthesis of purines, thymidylate, methionine, and other important biomolecules. Also exhibits THF-independent aldolase activity toward beta-hydroxyamino acids, producing glycine and aldehydes, via a retro-aldol mechanism. The polypeptide is Serine hydroxymethyltransferase (Kocuria rhizophila (strain ATCC 9341 / DSM 348 / NBRC 103217 / DC2201)).